Consider the following 488-residue polypeptide: MPRTRTPLAAIVLAAGKGTRMKSNKAKVLHEVAGRPLAYYPVKRAVELGASPVVVVVGHQAEAVEAALSAALPEAPLRFAVQEQQLGTAHAVLAAKRALRGYRGPVLILSGDTPLLRAETLEAVVSARRRARAAVSLATMTLEAPRGYGRVVRDARGRPARIVEEKDATDAERAVREVNAGLYCVDAELLWKKLAKVGTANAQREFYLTDLVPMAAQAGGVAGVEVPAEEASGVNDRIELARANRVMVGRLAEAFMRAGVTIEDPARFDCDEGVEIGADAVIEPNVRLRGRTRVGARTRVGVGAVITDGVLADGVTVNPYTVISEAKVAEGAILGPFSRLRPGADIGPEAHVGNFVEVKKSRLGKGAKANHLAYLGDAEIGAGANIGAGTITCNYDGERKNPTRIGDGAFIGSDSILVAPIEIGAGAYVAAGSTLTDPVPAGALALGRARQVTKEGWVAQRQAEKQMKGTATGPAPARKGRPAARRAS.

Positions 1–237 (MPRTRTPLAA…AEEASGVNDR (237 aa)) are pyrophosphorylase. Residues 13–16 (LAAG), Lys27, Gln82, 87–88 (GT), 110–112 (SGD), Gly149, Glu164, Asn179, and Asn235 each bind UDP-N-acetyl-alpha-D-glucosamine. Mg(2+) is bound at residue Asp112. Asn235 contributes to the Mg(2+) binding site. Residues 238-258 (IELARANRVMVGRLAEAFMRA) form a linker region. The tract at residues 259 to 488 (GVTIEDPARF…KGRPAARRAS (230 aa)) is N-acetyltransferase. The UDP-N-acetyl-alpha-D-glucosamine site is built by Arg341 and Lys359. The active-site Proton acceptor is His371. The UDP-N-acetyl-alpha-D-glucosamine site is built by Tyr374 and Asn385. Residues Ala388, 394–395 (NY), Ser413, Ala431, and Arg448 each bind acetyl-CoA. The tract at residues 459–488 (AQRQAEKQMKGTATGPAPARKGRPAARRAS) is disordered. Residues 478 to 488 (RKGRPAARRAS) are compositionally biased toward basic residues.

This sequence in the N-terminal section; belongs to the N-acetylglucosamine-1-phosphate uridyltransferase family. The protein in the C-terminal section; belongs to the transferase hexapeptide repeat family. Homotrimer. It depends on Mg(2+) as a cofactor.

Its subcellular location is the cytoplasm. The enzyme catalyses alpha-D-glucosamine 1-phosphate + acetyl-CoA = N-acetyl-alpha-D-glucosamine 1-phosphate + CoA + H(+). It catalyses the reaction N-acetyl-alpha-D-glucosamine 1-phosphate + UTP + H(+) = UDP-N-acetyl-alpha-D-glucosamine + diphosphate. Its pathway is nucleotide-sugar biosynthesis; UDP-N-acetyl-alpha-D-glucosamine biosynthesis; N-acetyl-alpha-D-glucosamine 1-phosphate from alpha-D-glucosamine 6-phosphate (route II): step 2/2. It participates in nucleotide-sugar biosynthesis; UDP-N-acetyl-alpha-D-glucosamine biosynthesis; UDP-N-acetyl-alpha-D-glucosamine from N-acetyl-alpha-D-glucosamine 1-phosphate: step 1/1. It functions in the pathway bacterial outer membrane biogenesis; LPS lipid A biosynthesis. In terms of biological role, catalyzes the last two sequential reactions in the de novo biosynthetic pathway for UDP-N-acetylglucosamine (UDP-GlcNAc). The C-terminal domain catalyzes the transfer of acetyl group from acetyl coenzyme A to glucosamine-1-phosphate (GlcN-1-P) to produce N-acetylglucosamine-1-phosphate (GlcNAc-1-P), which is converted into UDP-GlcNAc by the transfer of uridine 5-monophosphate (from uridine 5-triphosphate), a reaction catalyzed by the N-terminal domain. The chain is Bifunctional protein GlmU from Anaeromyxobacter dehalogenans (strain 2CP-C).